Here is a 343-residue protein sequence, read N- to C-terminus: GTPase Obg (343 aa).

One can recognise an Obg domain in the interval 2–160 (EKFVDRVKIF…RWIILELKLI (159 aa)). The region spanning 161 to 332 (ADVGLVGFPN…LKEGLWKKYE (172 aa)) is the OBG-type G domain. Residues 167–174 (GFPNAGKS), 192–196 (FTTLS), 214–217 (DIPG), 284–287 (NKID), and 313–315 (SAL) contribute to the GTP site. Mg(2+) contacts are provided by S174 and T194.

Belongs to the TRAFAC class OBG-HflX-like GTPase superfamily. OBG GTPase family. As to quaternary structure, monomer. It depends on Mg(2+) as a cofactor.

The protein resides in the cytoplasm. Functionally, an essential GTPase which binds GTP, GDP and possibly (p)ppGpp with moderate affinity, with high nucleotide exchange rates and a fairly low GTP hydrolysis rate. Plays a role in control of the cell cycle, stress response, ribosome biogenesis and in those bacteria that undergo differentiation, in morphogenesis control. The protein is GTPase Obg of Aquifex aeolicus (strain VF5).